The chain runs to 358 residues: WAT1-related protein At3g28080 (358 aa).

10 helical membrane-spanning segments follow: residues 12-32 (AVFL…STLF), 42-62 (IYPF…PSLF), 81-101 (IGLL…GIEY), 105-125 (TLAS…AVIF), 137-157 (SVAK…VIFY), 187-207 (WLIG…SFIL), 219-239 (FTVS…IGLV), 245-265 (PSIW…TGII), 283-303 (LYLA…GTIF), and 308-328 (LYLG…VVMW). The EamA domain occupies 27–155 (GLSTLFKVAT…LSLIGAFVVI (129 aa)).

Belongs to the drug/metabolite transporter (DMT) superfamily. Plant drug/metabolite exporter (P-DME) (TC 2.A.7.4) family.

Its subcellular location is the membrane. This Arabidopsis thaliana (Mouse-ear cress) protein is WAT1-related protein At3g28080.